The primary structure comprises 81 residues: Photosystem I iron-sulfur center (81 aa).

4Fe-4S ferredoxin-type domains are found at residues 2 to 31 (AHSVKIYDTCIGCTQCVRACPTDVLEMVPW) and 39 to 68 (IASAPRTEDCVGCKRCESACPTDYLSVRVY). 8 residues coordinate [4Fe-4S] cluster: cysteine 11, cysteine 14, cysteine 17, cysteine 21, cysteine 48, cysteine 51, cysteine 54, and cysteine 58.

The eukaryotic PSI reaction center is composed of at least 11 subunits. Requires [4Fe-4S] cluster as cofactor.

The protein resides in the plastid. It localises to the chloroplast thylakoid membrane. The catalysed reaction is reduced [plastocyanin] + hnu + oxidized [2Fe-2S]-[ferredoxin] = oxidized [plastocyanin] + reduced [2Fe-2S]-[ferredoxin]. Functionally, apoprotein for the two 4Fe-4S centers FA and FB of photosystem I (PSI); essential for photochemical activity. FB is the terminal electron acceptor of PSI, donating electrons to ferredoxin. The C-terminus interacts with PsaA/B/D and helps assemble the protein into the PSI complex. Required for binding of PsaD and PsaE to PSI. PSI is a plastocyanin-ferredoxin oxidoreductase, converting photonic excitation into a charge separation, which transfers an electron from the donor P700 chlorophyll pair to the spectroscopically characterized acceptors A0, A1, FX, FA and FB in turn. The polypeptide is Photosystem I iron-sulfur center (Gnetum gnemon (Spanish joint-fir)).